We begin with the raw amino-acid sequence, 482 residues long: tRNA sulfurtransferase (482 aa).

In terms of domain architecture, THUMP spans 61-165 (PAIRDALTRI…NDRLLLVKGR (105 aa)). Residues 183 to 184 (LI), Lys-265, Gly-287, and Gln-296 contribute to the ATP site. Cys-344 and Cys-456 are joined by a disulfide. Residues 404-482 (FGANDAILDI…GFSNVKVYRP (79 aa)) enclose the Rhodanese domain. Catalysis depends on Cys-456, which acts as the Cysteine persulfide intermediate.

The protein belongs to the ThiI family.

The protein localises to the cytoplasm. It carries out the reaction [ThiI sulfur-carrier protein]-S-sulfanyl-L-cysteine + a uridine in tRNA + 2 reduced [2Fe-2S]-[ferredoxin] + ATP + H(+) = [ThiI sulfur-carrier protein]-L-cysteine + a 4-thiouridine in tRNA + 2 oxidized [2Fe-2S]-[ferredoxin] + AMP + diphosphate. The enzyme catalyses [ThiS sulfur-carrier protein]-C-terminal Gly-Gly-AMP + S-sulfanyl-L-cysteinyl-[cysteine desulfurase] + AH2 = [ThiS sulfur-carrier protein]-C-terminal-Gly-aminoethanethioate + L-cysteinyl-[cysteine desulfurase] + A + AMP + 2 H(+). Its pathway is cofactor biosynthesis; thiamine diphosphate biosynthesis. In terms of biological role, catalyzes the ATP-dependent transfer of a sulfur to tRNA to produce 4-thiouridine in position 8 of tRNAs, which functions as a near-UV photosensor. Also catalyzes the transfer of sulfur to the sulfur carrier protein ThiS, forming ThiS-thiocarboxylate. This is a step in the synthesis of thiazole, in the thiamine biosynthesis pathway. The sulfur is donated as persulfide by IscS. This chain is tRNA sulfurtransferase, found in Klebsiella pneumoniae subsp. pneumoniae (strain ATCC 700721 / MGH 78578).